The primary structure comprises 198 residues: Superoxide dismutase [Mn], mitochondrial (198 aa).

Residue His-26 coordinates Mn(2+). The residue at position 34 (Tyr-34) is a 3'-nitrotyrosine. 2 positions are modified to N6-acetyllysine; alternate: Lys-44 and Lys-51. N6-succinyllysine; alternate is present on residues Lys-44 and Lys-51. His-74 lines the Mn(2+) pocket. Position 90 is an N6-acetyllysine (Lys-90). Residues Lys-98 and Lys-106 each carry the N6-acetyllysine; alternate modification. Residues Lys-98 and Lys-106 each carry the N6-succinyllysine; alternate modification. Asp-159 and His-163 together coordinate Mn(2+). At Lys-178 the chain carries N6-acetyllysine.

This sequence belongs to the iron/manganese superoxide dismutase family. As to quaternary structure, homotetramer. Mn(2+) serves as cofactor. Nitrated under oxidative stress. Nitration coupled with oxidation inhibits the catalytic activity. Post-translationally, acetylation at Lys-98 decreases enzymatic activity. Deacetylated by SIRT3 upon exposure to ionizing radiations or after long fasting. In terms of processing, polyubiquitinated; leading to proteasomal degradation. Deubiquitinated by USP36 which increases protein stability.

Its subcellular location is the mitochondrion matrix. It carries out the reaction 2 superoxide + 2 H(+) = H2O2 + O2. Its function is as follows. Destroys superoxide anion radicals which are normally produced within the cells and which are toxic to biological systems. The polypeptide is Superoxide dismutase [Mn], mitochondrial (SOD2) (Macaca fuscata fuscata (Japanese macaque)).